The primary structure comprises 237 residues: Uridylate kinase (237 aa).

12–15 serves as a coordination point for ATP; it reads KLSG. The interval 20–25 is involved in allosteric activation by GTP; that stretch reads GDEGFG. Gly-54 provides a ligand contact to UMP. ATP is bound by residues Gly-55 and Arg-59. UMP contacts are provided by residues Asp-74 and 135-142; that span reads TGSPFFTT. Positions 162, 168, and 171 each coordinate ATP.

The protein belongs to the UMP kinase family. Homohexamer.

Its subcellular location is the cytoplasm. It carries out the reaction UMP + ATP = UDP + ADP. It participates in pyrimidine metabolism; CTP biosynthesis via de novo pathway; UDP from UMP (UMPK route): step 1/1. Allosterically activated by GTP. Inhibited by UTP. Catalyzes the reversible phosphorylation of UMP to UDP. This chain is Uridylate kinase, found in Mannheimia succiniciproducens (strain KCTC 0769BP / MBEL55E).